The chain runs to 152 residues: SMN complex subunit smn1 (152 aa).

The segment at 26–51 is interacts with yip11/gem2; it reads KKYHSIEAKGGVSDPDSRLDGEKLIS. The tract at residues 88 to 110 is disordered; it reads DNKGLSDEKPETRAAETHQEFME. Residues 91-108 show a composition bias toward basic and acidic residues; the sequence is GLSDEKPETRAAETHQEF. The tract at residues 130–152 is may interact with gem8; the sequence is SWYYAGYYTGLAEGLAKSEQRKD.

It belongs to the SMN family. Homooligomer; may form homodimers and homotetramers. Part of the core SMN complex at least composed of smn1, yip11/gem2, gem6, gem7 and gem8. Part of the SMN-Sm complex. Interacts with yip11/gem2; the interaction is direct. Interacts with gem8; the interaction is direct. Interacts with proteins of the Sm complex, including smn1, smb1, smd1, smd2 and smd3.

Its subcellular location is the nucleus. The SMN complex catalyzes the assembly of small nuclear ribonucleoproteins (snRNPs), the building blocks of the spliceosome, and thereby plays an important role in the splicing of cellular pre-mRNAs. Most spliceosomal snRNPs contain a common set of Sm proteins smb1, smd1, smd2, smd3, sme1, smf1 and smg1 that assemble in a heptameric protein ring on the Sm site of the small nuclear RNA to form the core snRNP (Sm core). In the cytosol, the Sm proteins smd1, smd2, sme1, smf1 and smg1 (5Sm) are trapped in an inactive 6S pICln-Sm complex by the chaperone saf5 that controls the assembly of the core snRNP. To assemble core snRNPs, the SMN complex accepts the trapped 5Sm proteins from saf5 forming an intermediate. Binding of snRNA inside 5Sm triggers eviction of the SMN complex, thereby allowing binding of smd3 and smb1 to complete assembly of the core snRNP. Within the SMN complex, smn1 acts as a structural backbone and together with yip11/gem2 it gathers the Sm complex subunits. The sequence is that of SMN complex subunit smn1 from Schizosaccharomyces pombe (strain 972 / ATCC 24843) (Fission yeast).